The following is a 754-amino-acid chain: 5-methyltetrahydropteroyltriglutamate--homocysteine methyltransferase (754 aa).

5-methyltetrahydropteroyltri-L-glutamate-binding positions include 17 to 20 (RELK) and K117. L-homocysteine contacts are provided by residues 431–433 (IGS) and E484. L-methionine is bound by residues 431–433 (IGS) and E484. 5-methyltetrahydropteroyltri-L-glutamate is bound by residues 515 to 516 (RC) and W561. D599 lines the L-homocysteine pocket. D599 lines the L-methionine pocket. E605 lines the 5-methyltetrahydropteroyltri-L-glutamate pocket. Residues H641, C643, and E665 each contribute to the Zn(2+) site. H694 serves as the catalytic Proton donor. A Zn(2+)-binding site is contributed by C726.

Belongs to the vitamin-B12 independent methionine synthase family. The cofactor is Zn(2+).

The catalysed reaction is 5-methyltetrahydropteroyltri-L-glutamate + L-homocysteine = tetrahydropteroyltri-L-glutamate + L-methionine. Its pathway is amino-acid biosynthesis; L-methionine biosynthesis via de novo pathway; L-methionine from L-homocysteine (MetE route): step 1/1. Functionally, catalyzes the transfer of a methyl group from 5-methyltetrahydrofolate to homocysteine resulting in methionine formation. This is 5-methyltetrahydropteroyltriglutamate--homocysteine methyltransferase from Salmonella typhimurium (strain LT2 / SGSC1412 / ATCC 700720).